The primary structure comprises 342 residues: Transmembrane protein 59-like (342 aa).

The signal sequence occupies residues 1-24; the sequence is MAAVALMPPPLLLLLLLASPPAAS. N-linked (GlcNAc...) asparagine glycosylation is present at asparagine 97. The chain crosses the membrane as a helical span at residues 268 to 290; the sequence is WILACCLFLSVLVMLWLSCSTLV. Positions 340-342 match the Microbody targeting signal motif; it reads TKL.

It belongs to the TMEM59 family. Expressed preferentially at high level in the brain.

The protein localises to the golgi apparatus membrane. Functionally, modulates the O-glycosylation and complex N-glycosylation steps occurring during the Golgi maturation of APP. Inhibits APP transport to the cell surface and further shedding. The polypeptide is Transmembrane protein 59-like (TMEM59L) (Homo sapiens (Human)).